A 437-amino-acid polypeptide reads, in one-letter code: UDP-N-acetylmuramate--L-alanine ligase (437 aa).

108 to 114 (GAHGKTS) is an ATP binding site.

Belongs to the MurCDEF family.

The protein localises to the cytoplasm. The enzyme catalyses UDP-N-acetyl-alpha-D-muramate + L-alanine + ATP = UDP-N-acetyl-alpha-D-muramoyl-L-alanine + ADP + phosphate + H(+). It participates in cell wall biogenesis; peptidoglycan biosynthesis. Its function is as follows. Cell wall formation. The sequence is that of UDP-N-acetylmuramate--L-alanine ligase from Staphylococcus aureus (strain JH9).